A 472-amino-acid chain; its full sequence is Adenosylhomocysteinase (472 aa).

The substrate site is built by Thr61, Asp136, and Glu196. NAD(+) is bound at residue 197-199 (TTT). Positions 226 and 230 each coordinate substrate. Residues Asn231, 260–265 (GYGDVG), Glu283, Asn318, 339–341 (IGH), and Asn384 each bind NAD(+).

It belongs to the adenosylhomocysteinase family. NAD(+) serves as cofactor.

It localises to the cytoplasm. It carries out the reaction S-adenosyl-L-homocysteine + H2O = L-homocysteine + adenosine. The protein operates within amino-acid biosynthesis; L-homocysteine biosynthesis; L-homocysteine from S-adenosyl-L-homocysteine: step 1/1. May play a key role in the regulation of the intracellular concentration of adenosylhomocysteine. The protein is Adenosylhomocysteinase of Cupriavidus pinatubonensis (strain JMP 134 / LMG 1197) (Cupriavidus necator (strain JMP 134)).